Reading from the N-terminus, the 412-residue chain is Transcription factor NIGT1 (412 aa).

Disordered regions lie at residues 54-241 (MDAA…RCWA), 286-310 (KYRL…PAPP), and 358-412 (AMLP…TTSA). The span at 90–112 (ESTHADAAKSGKKEEAETSERHS) shows a compositional bias: basic and acidic residues. The span at 183-193 (ASSTTAAASST) shows a compositional bias: low complexity. Over residues 198–228 (SGDKPTDDDTEKHMETDKDNDKDAKDKDKEG) the composition is skewed to basic and acidic residues. The HTH myb-type domain maps to 232–292 (PHRKPRRCWA…HLQKYRLHTR (61 aa)). Positions 263 to 288 (PKQIRELMKVDGLTNDEVKSHLQKYR) form a DNA-binding region, H-T-H motif. The segment covering 383–392 (SGSEGRRSGD) has biased composition (basic and acidic residues). Residues 395 to 412 (DGSSSSPAVSSSSQTTSA) are compositionally biased toward low complexity.

Its subcellular location is the nucleus. Transcriptional repressor that may play a role in response to nitrogen. May be involved in a time-dependent signaling for transcriptional regulation of nitrate-responsive genes. Binds specifically to the DNA sequence motif 5'-GAATC-3' or 5'-GAATATTC-3'. Represses the activity of its own promoter trough binding to these motifs. This Oryza sativa subsp. japonica (Rice) protein is Transcription factor NIGT1.